The following is a 136-amino-acid chain: Membrane-bound negative regulator YvrL (136 aa).

4 helical membrane-spanning segments follow: residues 18-38 (LLAA…LFSL), 46-66 (AAHV…FEPF), 83-103 (LFIL…AHTT), and 106-126 (LISD…VFLI).

Its subcellular location is the cell membrane. Its function is as follows. Negatively regulates RNA polymerase sigma factor SigO-dependent transcription. Prevents the expression or secretion of OxdC under nonstress conditions. May act as an anti-sigma factor. This is Membrane-bound negative regulator YvrL (yvrL) from Bacillus subtilis (strain 168).